We begin with the raw amino-acid sequence, 1170 residues long: Thrombospondin-1 (1170 aa).

An N-terminal signal peptide occupies residues 1–18 (MGLAWGLGVLFLMHVCGT). A heparin-binding region spans residues 47 to 95 (RLVKGPDPSSPAFRIEDANLIPPVPDDKFQDLVDAVRAEKGFLLLASLR). The 206-residue stretch at 65–270 (NLIPPVPDDK…HKTKDLQAIC (206 aa)) folds into the Laminin G-like domain. An intrachain disulfide couples C171 to C232. N248 and N360 each carry an N-linked (GlcNAc...) asparagine glycan. Positions 316–373 (PLCYHNGVQYRNNEEWTVDSCTECHCQNSVTICKKVSCPIMPCSNATVPDGECCPRCW) constitute a VWFC domain. TSP type-1 domains follow at residues 379–429 (DDGW…QECD), 435–490 (DGGW…DACP), and 492–547 (NGGW…QDCP). C-linked (Man) tryptophan glycosylation is present at W385. Intrachain disulfides connect C391–C423, C395–C428, and C406–C413. S394 is a glycosylation site (O-linked (Fuc...) serine). C-linked (Man) tryptophan glycosylation is found at W438 and W441. 3 cysteine pairs are disulfide-bonded: C447/C484, C451/C489, and C462/C474. The O-linked (Fuc...) threonine glycan is linked to T450. W498 carries a C-linked (Man) tryptophan glycan. Cystine bridges form between C504-C541, C508-C546, C519-C531, C551-C562, C556-C572, C575-C586, C592-C608, C599-C617, C620-C644, C650-C663, C657-C676, C678-C689, C705-C713, C718-C738, C754-C774, C777-C797, C813-C833, C836-C856, C874-C894, C910-C930, and C946-C1167. O-linked (Fuc...) threonine glycosylation is present at T507. Residues 531 to 1152 (CVGDVTENQI…YAGGRLGLFV (622 aa)) form an involved in retention in extracellular matrix (ECM); involved in trimer formation region. The EGF-like 1 domain occupies 547 to 587 (PIDGCLSNPCFAGVKCTSYPDGSWKCGACPPGYSGNGIQCT). S553 carries O-linked (Xyl) serine glycosylation. The EGF-like 2 domain maps to 646-690 (PRNPCTDGTHDCNKNAKCNYLGHYSDPMYRCECKPGYAGNGIICG). 8 TSP type-3 repeats span residues 691–726 (EDTDLDGWPNENLVCVANATYHCKKDNCPNLPNSGQ), 727–762 (EDYDKDGIGDACDDDDDNDKIPDDRDNCPFHYNPAQ), 763–785 (YDYDRDDVGDRCDNCPYNHNPDQ), 786–821 (ADTDNNGEGDACAADIDGDGILNERDNCQYVYNVDQ), 822–844 (RDTDMDGVGDQCDNCPLEHNPDQ), 845–882 (LDSDSDRIGDTCDNNQDIDEDGHQNNLDNCPYVPNANQ), 883–918 (ADHDKDGKGDACDHDDDNDGIPDDKDNCRLVPNPDQ), and 919–954 (KDSDGDGRGDACKDDFDHDSVPDIDDICPENVDISE). N708 is a glycosylation site (N-linked (GlcNAc...) asparagine). The segment at 839–934 (EHNPDQLDSD…GRGDACKDDF (96 aa)) is disordered. 3 stretches are compositionally biased toward basic and acidic residues: residues 840 to 854 (HNPDQLDSDSDRIGD), 883 to 894 (ADHDKDGKGDAC), and 917 to 934 (DQKDSDGDGRGDACKDDF). The Cell attachment site signature appears at 926 to 928 (RGD). The TSP C-terminal domain maps to 958 to 1170 (RRFQMIPLDP…SDLKYECRDP (213 aa)). N1067 is a glycosylation site (N-linked (GlcNAc...) asparagine).

This sequence belongs to the thrombospondin family. As to quaternary structure, homotrimer; disulfide-linked. Can bind to fibrinogen, fibronectin, laminin, type V collagen and integrins alpha-V/beta-1, alpha-V/beta-3 and alpha-IIb/beta-3. Binds heparin. Interacts (via the C-terminal domain) with CD47. Interacts (via the TSP type I repeats) with CD36; the interaction conveys an antiangiogenic effect. Interacts (via the TSP type I repeats) with HRG; the interaction blocks the antiangiogenic effect of THBS1 with CD36. Interacts with ATF6 (via lumenal domain). Interacts with FN1; this interaction is enhanced by TNFAIP6, which may act as a bridging molecule between FN1 and THBS1. Interacts with SIRPA; the interaction stimulates phosphorylation of SIRPA. As to expression, expressed by platelets (at protein level). Expressed by monocyte-derived immature and mature dendritic cells (at protein level).

Its subcellular location is the secreted. The protein resides in the cell surface. It is found in the extracellular space. The protein localises to the extracellular matrix. It localises to the endoplasmic reticulum. Its subcellular location is the sarcoplasmic reticulum. In terms of biological role, adhesive glycoprotein that mediates cell-to-cell and cell-to-matrix interactions. Multifunctional, involved in inflammation, angiogenesis, wound healing, reactive oxygen species (ROS) signaling, nitrous oxide (NO) signaling, apoptosis, senescence, aging, cellular self-renewal, stemness, and cardiovascular and metabolic homeostasis. Negatively modulates dendritic cell activation and cytokine release, as part of an autocrine feedback loop, contributing to the resolution of inflammation and immune homeostasis. Ligand for receptor CD47. Modulates nitrous oxide (NO) signaling via CD47, hence playing a role as a pressor agent, supporting blood pressure. Plays a role in endothelial cell senescence, acting via CD47, by increasing the abundance and activation of NADPH oxidase NOX1, and so generating excess ROS. Inhibits stem cell self-renewal, acting via CD47 signaling, probably by regulation of the stem cell transcription factors POU5F1/OCT4, SOX2, MYC/c-Myc and KLF4. Negatively modulates wound healing, acting via CD47. Ligand for receptor CD36. Involved in inducing apoptosis in podocytes in response to elevated free fatty acids, acting via CD36. Plays a role in suppressing angiogenesis, acting, depending on context, via CD36 or CD47. Promotes cellular senescence in a TP53-CDKN1A-RB1 signaling-dependent manner. Ligand for immunoglobulin-like cell surface receptor SIRPA. Involved in ROS signaling in non-phagocytic cells, stimulating NADPH oxidase-derived ROS production, acting via interaction with SIRPA. Plays a role in metabolic dysfunction in diet-induced obesity, perhaps acting by exacerbating adipose inflammatory activity; its effects may be mediated, at least in part, through enhanced adipocyte proliferation. Plays a role in ER stress response, via its interaction with the activating transcription factor 6 alpha (ATF6) which produces adaptive ER stress response factors. May be involved in age-related conditions, including metabolic dysregulation, during normal aging. The polypeptide is Thrombospondin-1 (Homo sapiens (Human)).